The primary structure comprises 645 residues: Acetyl-coenzyme A synthetase (645 aa).

CoA contacts are provided by residues 190-193 (RGGR) and Thr-308. ATP-binding positions include 384–386 (GEP), 408–413 (DTWWQT), Asp-497, and Arg-512. A CoA-binding site is contributed by Ser-520. Arg-523 provides a ligand contact to ATP. Mg(2+) contacts are provided by Val-534, His-536, and Val-539. N6-acetyllysine is present on Lys-606.

The protein belongs to the ATP-dependent AMP-binding enzyme family. Mg(2+) is required as a cofactor. Post-translationally, acetylated. Deacetylation by the SIR2-homolog deacetylase activates the enzyme.

The catalysed reaction is acetate + ATP + CoA = acetyl-CoA + AMP + diphosphate. Catalyzes the conversion of acetate into acetyl-CoA (AcCoA), an essential intermediate at the junction of anabolic and catabolic pathways. AcsA undergoes a two-step reaction. In the first half reaction, AcsA combines acetate with ATP to form acetyl-adenylate (AcAMP) intermediate. In the second half reaction, it can then transfer the acetyl group from AcAMP to the sulfhydryl group of CoA, forming the product AcCoA. This Saccharophagus degradans (strain 2-40 / ATCC 43961 / DSM 17024) protein is Acetyl-coenzyme A synthetase.